Here is a 391-residue protein sequence, read N- to C-terminus: G-patch domain-containing protein 1 (391 aa).

In terms of domain architecture, G-patch spans 15–61 (KDSAAFKLMKSMGWEEGEGLGKDKQGIKGYVRVTNKQDTSGVGLDKP). 2 disordered regions span residues 80-132 (VQAA…EKGK) and 212-307 (KASE…PAKR). Composition is skewed to acidic residues over residues 92–102 (DDSDKEDESED) and 265–295 (NSDD…DDDK). Positions 305-312 (AKRKHDEI) match the Nuclear localization signal motif.

As to expression, strongly expressed in tissues with high cell proliferation activity that have a high demand for ribosome production such as shoot tips, leaves primordia, root tips and floral buds.

The protein resides in the nucleus. It localises to the nucleolus. In terms of biological role, involved in ribosome biogenesis, required for normal progression of rRNA processing. Seems to promote cell proliferation in leaves. In Arabidopsis thaliana (Mouse-ear cress), this protein is G-patch domain-containing protein 1.